A 130-amino-acid chain; its full sequence is uncharacterized protein (130 aa).

This is an uncharacterized protein from Treponema pallidum (strain Nichols).